The sequence spans 472 residues: Protein c-ets-2-A (472 aa).

Residues 85–170 enclose the PNT domain; the sequence is NTFNGFAKKR…EHLEEMMKEH (86 aa). Positions 366 to 446 form a DNA-binding region, ETS; it reads IQLWQFLLEL…SGKRYVYRFV (81 aa).

This sequence belongs to the ETS family.

Its subcellular location is the nucleus. Functionally, probable transcription factor. This is Protein c-ets-2-A (ets2-a) from Xenopus laevis (African clawed frog).